We begin with the raw amino-acid sequence, 425 residues long: UPF0597 protein Moth_1414 (425 aa).

The protein belongs to the UPF0597 family.

The polypeptide is UPF0597 protein Moth_1414 (Moorella thermoacetica (strain ATCC 39073 / JCM 9320)).